The chain runs to 481 residues: Zinc finger CCCH domain-containing protein 4 (481 aa).

A C3H1-type zinc finger spans residues 157-184 (RNRAHVCSFFIRGECTRGAECPYRHEMP). The 74-residue stretch at 228 to 301 (KTLYVGGLNS…QRLKLTWGRP (74 aa)) folds into the RRM domain. The segment at 329–481 (HNQPPPMQQY…DVSTATGSSQ (153 aa)) is disordered. Pro residues predominate over residues 331-345 (QPPPMQQYYMHPPPA). Low complexity-rich tracts occupy residues 369–389 (AGGSSTENNGASSSSYMMPPH) and 399–410 (YMPSPYQQQYPP). Residues 423–444 (APPPAAYPYPQQPGPGSRPAPS) are compositionally biased toward pro residues. The segment covering 449 to 471 (SAISPDSAPAGSGAPSGSSQQAP) has biased composition (low complexity). Polar residues predominate over residues 472 to 481 (DVSTATGSSQ).

This chain is Zinc finger CCCH domain-containing protein 4, found in Arabidopsis thaliana (Mouse-ear cress).